A 313-amino-acid polypeptide reads, in one-letter code: Tyrosine recombinase XerC (313 aa).

In terms of domain architecture, Core-binding (CB) spans 1 to 85 (MNDQVEAFLR…AVKSFFAFLT (85 aa)). One can recognise a Tyr recombinase domain in the interval 106–291 (DLPRALTPHQ…NHASSAQPVR (186 aa)). Catalysis depends on residues Arg-147, Lys-171, His-243, Arg-246, and His-269. Tyr-278 serves as the catalytic O-(3'-phospho-DNA)-tyrosine intermediate.

This sequence belongs to the 'phage' integrase family. XerC subfamily. As to quaternary structure, forms a cyclic heterotetrameric complex composed of two molecules of XerC and two molecules of XerD.

It localises to the cytoplasm. Functionally, site-specific tyrosine recombinase, which acts by catalyzing the cutting and rejoining of the recombining DNA molecules. The XerC-XerD complex is essential to convert dimers of the bacterial chromosome into monomers to permit their segregation at cell division. It also contributes to the segregational stability of plasmids. This Roseiflexus sp. (strain RS-1) protein is Tyrosine recombinase XerC.